An 82-amino-acid polypeptide reads, in one-letter code: Sec-independent protein translocase protein TatA (82 aa).

Residues 1–21 (MGGISIWQLLIIAVIIVLLFG) traverse the membrane as a helical segment. Positions 48–82 (PAKEAKKDADFVPQNLEKKEAETVEKQKQNDKEQA) are disordered.

The protein belongs to the TatA/E family. The Tat system comprises two distinct complexes: a TatABC complex, containing multiple copies of TatA, TatB and TatC subunits, and a separate TatA complex, containing only TatA subunits. Substrates initially bind to the TatABC complex, which probably triggers association of the separate TatA complex to form the active translocon.

The protein localises to the cell inner membrane. Its function is as follows. Part of the twin-arginine translocation (Tat) system that transports large folded proteins containing a characteristic twin-arginine motif in their signal peptide across membranes. TatA could form the protein-conducting channel of the Tat system. The chain is Sec-independent protein translocase protein TatA from Aliivibrio fischeri (strain ATCC 700601 / ES114) (Vibrio fischeri).